Here is a 344-residue protein sequence, read N- to C-terminus: Eukaryotic translation initiation factor 2 subunit alpha (344 aa).

In terms of domain architecture, S1 motif spans Asp-21–Arg-92. At Ser-56 the chain carries Phosphoserine; by GCN2. The interval Leu-309–Glu-344 is disordered. Acidic residues predominate over residues Glu-314–Ile-336. Phosphoserine; by CK2 occurs at positions 317 and 322.

Belongs to the eIF-2-alpha family. In terms of assembly, eukaryotic translation initiation factor 2 eIF2 is a heterotrimeric complex composed of an alpha, a beta and a gamma subunit. Post-translationally, phosphorylated at Ser-56 by GCN2. Phosphorylated at Ser-317 and Ser-322 by CK2.

Its subcellular location is the cytoplasm. It is found in the cytosol. Its function is as follows. Functions in the early steps of protein synthesis by forming a ternary complex with GTP and initiator tRNA. This complex binds to a 40S ribosomal subunit, followed by mRNA binding to form a 43S pre-initiation complex. Junction of the 60S ribosomal subunit to form the 80S initiation complex is preceded by hydrolysis of the GTP bound to eIF-2 and release of an eIF-2-GDP binary complex. In order for eIF-2 to recycle and catalyze another round of initiation, the GDP bound to eIF-2 must exchange with GTP by way of a reaction catalyzed by eIF2B. This is Eukaryotic translation initiation factor 2 subunit alpha from Arabidopsis thaliana (Mouse-ear cress).